The following is a 337-amino-acid chain: Calcium-binding protein 39-like (337 aa).

It belongs to the Mo25 family. Component of a trimeric complex composed of STK11/LKB1, STRAD (STRADA or STRADB) and CAB39/MO25 (CAB39/MO25alpha or CAB39L/MO25beta): the complex tethers STK11/LKB1 in the cytoplasm and stimulates its catalytic activity.

In terms of biological role, component of a complex that binds and activates STK11/LKB1. In the complex, required to stabilize the interaction between CAB39/MO25 (CAB39/MO25alpha or CAB39L/MO25beta) and STK11/LKB1. The protein is Calcium-binding protein 39-like (Cab39l) of Mus musculus (Mouse).